The following is a 157-amino-acid chain: Ribosomal RNA large subunit methyltransferase H (157 aa).

S-adenosyl-L-methionine contacts are provided by residues L73, G105, and 124 to 129 (LSQMTF).

Belongs to the RNA methyltransferase RlmH family. In terms of assembly, homodimer.

The protein resides in the cytoplasm. It catalyses the reaction pseudouridine(1915) in 23S rRNA + S-adenosyl-L-methionine = N(3)-methylpseudouridine(1915) in 23S rRNA + S-adenosyl-L-homocysteine + H(+). Functionally, specifically methylates the pseudouridine at position 1915 (m3Psi1915) in 23S rRNA. This chain is Ribosomal RNA large subunit methyltransferase H, found in Flavobacterium psychrophilum (strain ATCC 49511 / DSM 21280 / CIP 103535 / JIP02/86).